The following is a 167-amino-acid chain: Plastocyanin major isoform, chloroplastic (167 aa).

A chloroplast-targeting transit peptide spans 1–52; it reads MASVTSATVAIPSFTGLKASTIKSSATVRIQTAAVASPKLTVKSSLKNFGVA. Residues 53 to 68 constitute a thylakoid transit peptide; that stretch reads AVAAAASIALAGNAMA. Residues 69–167 form the Plastocyanin-like domain; the sequence is IEVLLGGGDG…AGMVGKVTVN (99 aa). Cu cation contacts are provided by histidine 105, cysteine 152, histidine 155, and methionine 160.

It belongs to the plastocyanin family. Cu(2+) is required as a cofactor.

It is found in the plastid. Its subcellular location is the chloroplast thylakoid membrane. Its function is as follows. Participates in electron transfer between P700 and the cytochrome b6-f complex in photosystem I. Seems to be the major plastocyanin in Arabidopsis. The chain is Plastocyanin major isoform, chloroplastic (DRT112) from Arabidopsis thaliana (Mouse-ear cress).